Consider the following 601-residue polypeptide: DNA replication licensing factor MCM3 (601 aa).

The MCM domain maps to 180 to 386 (PINLLSKSIA…LDRRLSQHVL (207 aa)). An ATP-binding site is contributed by 229–236 (GDPSTAKS). The Arginine finger motif lies at 361–364 (SRFD).

This sequence belongs to the MCM family. Component of the MCM2-7 complex.

It localises to the nucleus. The protein localises to the chromosome. The protein resides in the nucleoplasm. The enzyme catalyses ATP + H2O = ADP + phosphate + H(+). Functionally, acts as a component of the MCM2-7 complex (MCM complex) which is the replicative helicase essential for DNA replication initiation and elongation in eukaryotic cells. Required for DNA replication and cell proliferation. The active ATPase sites in the MCM2-7 ring are formed through the interaction surfaces of two neighboring subunits such that a critical structure of a conserved arginine finger motif is provided in trans relative to the ATP-binding site of the Walker A box of the adjacent subunit. This is DNA replication licensing factor MCM3 from Entamoeba histolytica (strain ATCC 30459 / HM-1:IMSS / ABRM).